The primary structure comprises 1942 residues: Myosin-2 (1942 aa).

The 50-residue stretch at 33 to 82 (DAKTSVFVAEPKESFVKGTIQSKDAGKVTVKTEAGATLTVKEDQIFPMNP) folds into the Myosin N-terminal SH3-like domain. A phosphothreonine mark is found at Thr-64 and Thr-69. A Myosin motor domain is found at 86-785 (DKIEDMAMMT…LLGLLEEMRD (700 aa)). 179–186 (GESGAGKT) is an ATP binding site. Tyr-389 carries the post-translational modification Phosphotyrosine. A Phosphothreonine modification is found at Thr-419. Ser-625 bears the Phosphoserine mark. Residues 662-684 (LNKLMTNLRSTHPHFVRCIIPNE) are actin-binding. His-760 carries the post-translational modification Pros-methylhistidine. The 30-residue stretch at 788-817 (LAQLITRTQAMCRGFLARVEYQKMVERRES) folds into the IQ domain. Residues 849–1930 (SAETEKEMAT…ESQVNKLRVK (1082 aa)) are a coiled coil. Residues Ser-1095 and Ser-1099 each carry the phosphoserine modification. The tract at residues 1130-1175 (EAERASRAKAEKQRSDLSRELEEISERLEEAGGATSAQIEMNKKRE) is disordered. Over residues 1131–1159 (AERASRAKAEKQRSDLSRELEEISERLEE) the composition is skewed to basic and acidic residues. 2 positions are modified to phosphoserine: Ser-1165 and Ser-1240. Thr-1244 bears the Phosphothreonine mark. Ser-1246 is modified (phosphoserine). Position 1258 is a phosphothreonine (Thr-1258). Ser-1264 is modified (phosphoserine). Thr-1289 carries the phosphothreonine modification. A phosphoserine mark is found at Ser-1291, Ser-1295, Ser-1306, and Ser-1309. Position 1467 is a phosphotyrosine (Tyr-1467). At Thr-1470 the chain carries Phosphothreonine. Ser-1477 is modified (phosphoserine). Residue Tyr-1495 is modified to Phosphotyrosine. Ser-1498 is subject to Phosphoserine. Thr-1504 is modified (phosphothreonine). Ser-1517 bears the Phosphoserine mark. At Thr-1520 the chain carries Phosphothreonine. A phosphoserine mark is found at Ser-1557, Ser-1577, Ser-1603, Ser-1606, Ser-1717, and Ser-1729. Thr-1733 and Thr-1739 each carry phosphothreonine. Ser-1742 bears the Phosphoserine mark.

The protein belongs to the TRAFAC class myosin-kinesin ATPase superfamily. Myosin family. Muscle myosin is a hexameric protein that consists of 2 heavy chain subunits (MHC), 2 alkali light chain subunits (MLC) and 2 regulatory light chain subunits (MLC-2). Interacts with GCSAM. As to expression, expressed in type 2a myofibers in the tibialis anterior and soleus muscles (at protein level).

The protein resides in the cytoplasm. It is found in the myofibril. In terms of biological role, myosins are actin-based motor molecules with ATPase activity essential for muscle contraction. This chain is Myosin-2, found in Mus musculus (Mouse).